The chain runs to 145 residues: 3-hydroxyacyl-[acyl-carrier-protein] dehydratase FabZ (145 aa).

Residue H49 is part of the active site.

It belongs to the thioester dehydratase family. FabZ subfamily.

The protein localises to the cytoplasm. It catalyses the reaction a (3R)-hydroxyacyl-[ACP] = a (2E)-enoyl-[ACP] + H2O. Its function is as follows. Involved in unsaturated fatty acids biosynthesis. Catalyzes the dehydration of short chain beta-hydroxyacyl-ACPs and long chain saturated and unsaturated beta-hydroxyacyl-ACPs. The polypeptide is 3-hydroxyacyl-[acyl-carrier-protein] dehydratase FabZ (Rickettsia bellii (strain OSU 85-389)).